We begin with the raw amino-acid sequence, 282 residues long: Adenosylcobinamide-GDP ribazoletransferase (282 aa).

The next 6 membrane-spanning stretches (helical) occupy residues 47–67, 72–92, 124–144, 167–187, 208–228, and 231–251; these read GVGI…QALL, FTPL…TGGF, AFGA…LAML, AALL…IWLL, GSLL…GLAL, and ISLI…GALF.

It belongs to the CobS family. It depends on Mg(2+) as a cofactor.

The protein localises to the cell inner membrane. The catalysed reaction is alpha-ribazole + adenosylcob(III)inamide-GDP = adenosylcob(III)alamin + GMP + H(+). It catalyses the reaction alpha-ribazole 5'-phosphate + adenosylcob(III)inamide-GDP = adenosylcob(III)alamin 5'-phosphate + GMP + H(+). It participates in cofactor biosynthesis; adenosylcobalamin biosynthesis; adenosylcobalamin from cob(II)yrinate a,c-diamide: step 7/7. In terms of biological role, joins adenosylcobinamide-GDP and alpha-ribazole to generate adenosylcobalamin (Ado-cobalamin). Also synthesizes adenosylcobalamin 5'-phosphate from adenosylcobinamide-GDP and alpha-ribazole 5'-phosphate. The sequence is that of Adenosylcobinamide-GDP ribazoletransferase from Polaromonas sp. (strain JS666 / ATCC BAA-500).